We begin with the raw amino-acid sequence, 184 residues long: MGLEERLPGGILLSTVEKVAGYVRAGSLWPATFGLACCAIEMMSTAGPRFDISRFGMERFSATPRQADLMIVAGRVSQKMAPVLRQIYDQMAEPKWVLAMGVCASSGGMFNNYAIVQGVDHVVPVDIYLPGCPPRPEMLLHAIIKLHEKIQQMPLGVNRDEAIREAEQAALAVPSTIELKGLLR.

[4Fe-4S] cluster contacts are provided by Cys37, Cys38, Cys103, and Cys132.

It belongs to the complex I 20 kDa subunit family. As to quaternary structure, NDH-1 is composed of 14 different subunits. Subunits NuoB, C, D, E, F, and G constitute the peripheral sector of the complex. [4Fe-4S] cluster serves as cofactor.

It is found in the cell membrane. The catalysed reaction is a quinone + NADH + 5 H(+)(in) = a quinol + NAD(+) + 4 H(+)(out). In terms of biological role, NDH-1 shuttles electrons from NADH, via FMN and iron-sulfur (Fe-S) centers, to quinones in the respiratory chain. The immediate electron acceptor for the enzyme in this species is believed to be a menaquinone. Couples the redox reaction to proton translocation (for every two electrons transferred, four hydrogen ions are translocated across the cytoplasmic membrane), and thus conserves the redox energy in a proton gradient. This Mycobacterium sp. (strain JLS) protein is NADH-quinone oxidoreductase subunit B.